The primary structure comprises 379 residues: Cytochrome b (379 aa).

Helical transmembrane passes span 32–52 (FGSL…FLAM), 76–97 (WLIR…YMHI), 112–132 (WNVG…GYVL), and 177–197 (FFAF…IHLL). Positions 82 and 96 each coordinate heme b. 2 residues coordinate heme b: H181 and H195. H200 contributes to the a ubiquinone binding site. The next 4 membrane-spanning stretches (helical) occupy residues 225 to 245 (YKDL…ALFS), 287 to 307 (LGGV…PFLH), 319 to 339 (LTQI…WIGG), and 346 to 366 (FIII…VLSP).

The protein belongs to the cytochrome b family. As to quaternary structure, the cytochrome bc1 complex contains 3 respiratory subunits (MT-CYB, CYC1 and UQCRFS1), 2 core proteins (UQCRC1 and UQCRC2) and probably 6 low-molecular weight proteins. Heme b serves as cofactor.

The protein localises to the mitochondrion inner membrane. Its function is as follows. Component of the ubiquinol-cytochrome c reductase complex (complex III or cytochrome b-c1 complex) that is part of the mitochondrial respiratory chain. The b-c1 complex mediates electron transfer from ubiquinol to cytochrome c. Contributes to the generation of a proton gradient across the mitochondrial membrane that is then used for ATP synthesis. This is Cytochrome b (mt-cyb) from Chlorophthalmus agassizi (Shortnose greeneye).